The chain runs to 403 residues: S-adenosylmethionine synthase (403 aa).

His15 provides a ligand contact to ATP. Asp17 contributes to the Mg(2+) binding site. A K(+)-binding site is contributed by Glu43. Residues Glu56 and Gln99 each coordinate L-methionine. The segment at 99–109 (QSPDINQGVDR) is flexible loop. Residues 166 to 168 (DAK), 232 to 233 (KF), Asp241, 247 to 248 (RK), Ala264, and Lys268 each bind ATP. Asp241 contacts L-methionine. Lys272 serves as a coordination point for L-methionine.

Belongs to the AdoMet synthase family. Homotetramer; dimer of dimers. Requires Mg(2+) as cofactor. The cofactor is K(+).

The protein localises to the cytoplasm. It carries out the reaction L-methionine + ATP + H2O = S-adenosyl-L-methionine + phosphate + diphosphate. Its pathway is amino-acid biosynthesis; S-adenosyl-L-methionine biosynthesis; S-adenosyl-L-methionine from L-methionine: step 1/1. Its function is as follows. Catalyzes the formation of S-adenosylmethionine (AdoMet) from methionine and ATP. The overall synthetic reaction is composed of two sequential steps, AdoMet formation and the subsequent tripolyphosphate hydrolysis which occurs prior to release of AdoMet from the enzyme. The protein is S-adenosylmethionine synthase of Xanthomonas campestris pv. campestris (strain ATCC 33913 / DSM 3586 / NCPPB 528 / LMG 568 / P 25).